A 615-amino-acid polypeptide reads, in one-letter code: MSKYTILDKINTPSDLKLIPESQLKILSAELRAFLVDTLDVSGGHFASSLGATELTVALHYVYNAPDDNIVWDVGHQTYIHKILTGRKDKLVTIKKDGGISGFPKRSESEYDTFGVGHSSTSISAALGMAIADRLQGKSSNTVAVIGDGAITGGMAFEALNHAGGIKEDILVILNDNEMSISDNVGGLSAHFSKIISGGFYNSIREKGKEVLKNIPPIFEFVKKVETQTKGMFVPANFFEDLGFYYVGPIDGHDVTELVKTLRILKDHKGPKLLHVITKKGKGYTKAESDPIKFHHVAPSFHSGENITTKISKPTYSNIFGDWICQKAAKDKRLVGITPAMKEGSDLIRFSQLYPHRYFDVAIAEQHAVTFAGGLACQGLKPVVAIYSTFLQRAYDQVIHDIALQNLDVLYAVDRAGLVGADGATHDGSFDLAFMRCIPNHVIMTPSDENEAYHMLEFGYEYNGPAMVRYPRGAGIGAEITGSLDLELGKAKIVKQGSKIAILNFGTLLPLAKQLAEKYHATVIDMRFVKPLDEIMLDKVSQTYEIILTLEENCIAGGAGSAVNEYFVAKDLSNKIIVRNFGLQDKFLNHGTKDLLLAQSKLCVENISQELDKLI.

Thiamine diphosphate-binding positions include H76 and G117–S119. Mg(2+) is bound at residue D148. Residues G149–A150, N177, Y284, and E365 each bind thiamine diphosphate. N177 lines the Mg(2+) pocket.

The protein belongs to the transketolase family. DXPS subfamily. In terms of assembly, homodimer. Mg(2+) serves as cofactor. Requires thiamine diphosphate as cofactor.

It catalyses the reaction D-glyceraldehyde 3-phosphate + pyruvate + H(+) = 1-deoxy-D-xylulose 5-phosphate + CO2. It functions in the pathway metabolic intermediate biosynthesis; 1-deoxy-D-xylulose 5-phosphate biosynthesis; 1-deoxy-D-xylulose 5-phosphate from D-glyceraldehyde 3-phosphate and pyruvate: step 1/1. In terms of biological role, catalyzes the acyloin condensation reaction between C atoms 2 and 3 of pyruvate and glyceraldehyde 3-phosphate to yield 1-deoxy-D-xylulose-5-phosphate (DXP). The sequence is that of 1-deoxy-D-xylulose-5-phosphate synthase from Francisella tularensis subsp. mediasiatica (strain FSC147).